Reading from the N-terminus, the 317-residue chain is Beta-ketoacyl-[acyl-carrier-protein] synthase III (317 aa).

Catalysis depends on residues cysteine 112 and histidine 244. Residues 245 to 249 (QANLR) form an ACP-binding region. Asparagine 274 is an active-site residue.

The protein belongs to the thiolase-like superfamily. FabH family. As to quaternary structure, homodimer.

Its subcellular location is the cytoplasm. It carries out the reaction malonyl-[ACP] + acetyl-CoA + H(+) = 3-oxobutanoyl-[ACP] + CO2 + CoA. It participates in lipid metabolism; fatty acid biosynthesis. Functionally, catalyzes the condensation reaction of fatty acid synthesis by the addition to an acyl acceptor of two carbons from malonyl-ACP. Catalyzes the first condensation reaction which initiates fatty acid synthesis and may therefore play a role in governing the total rate of fatty acid production. Possesses both acetoacetyl-ACP synthase and acetyl transacylase activities. Its substrate specificity determines the biosynthesis of branched-chain and/or straight-chain of fatty acids. The sequence is that of Beta-ketoacyl-[acyl-carrier-protein] synthase III from Aliivibrio fischeri (strain ATCC 700601 / ES114) (Vibrio fischeri).